We begin with the raw amino-acid sequence, 230 residues long: Cytochrome c oxidase subunit 2 (230 aa).

Topologically, residues 1–29 are mitochondrial intermembrane; the sequence is NNFFQGYNLLFQHSLFASYMDWFHAFNCS. A helical membrane pass occupies residues 30–50; it reads LLLGVLVFVTLLFGYLIFSTF. The Mitochondrial matrix segment spans residues 51-63; that stretch reads YFKSKKIEYQFGE. A helical membrane pass occupies residues 64–84; sequence LLCSIFPTIILLMQMVPSLSL. Over 85 to 230 the chain is Mitochondrial intermembrane; sequence LYYYGLMNLD…FKSWCFGTME (146 aa). Cu cation contacts are provided by His-163, Cys-198, Glu-200, Cys-202, His-206, and Met-209. Residue Glu-200 participates in Mg(2+) binding.

Belongs to the cytochrome c oxidase subunit 2 family. Component of the cytochrome c oxidase (complex IV, CIV), a multisubunit enzyme composed of a catalytic core of 3 subunits and several supernumerary subunits. The complex exists as a monomer or a dimer and forms supercomplexes (SCs) in the inner mitochondrial membrane with ubiquinol-cytochrome c oxidoreductase (cytochrome b-c1 complex, complex III, CIII). Cu cation serves as cofactor.

It is found in the mitochondrion inner membrane. The catalysed reaction is 4 Fe(II)-[cytochrome c] + O2 + 8 H(+)(in) = 4 Fe(III)-[cytochrome c] + 2 H2O + 4 H(+)(out). Functionally, component of the cytochrome c oxidase, the last enzyme in the mitochondrial electron transport chain which drives oxidative phosphorylation. The respiratory chain contains 3 multisubunit complexes succinate dehydrogenase (complex II, CII), ubiquinol-cytochrome c oxidoreductase (cytochrome b-c1 complex, complex III, CIII) and cytochrome c oxidase (complex IV, CIV), that cooperate to transfer electrons derived from NADH and succinate to molecular oxygen, creating an electrochemical gradient over the inner membrane that drives transmembrane transport and the ATP synthase. Cytochrome c oxidase is the component of the respiratory chain that catalyzes the reduction of oxygen to water. Electrons originating from reduced cytochrome c in the intermembrane space (IMS) are transferred via the dinuclear copper A center (CU(A)) of subunit 2 and heme A of subunit 1 to the active site in subunit 1, a binuclear center (BNC) formed by heme A3 and copper B (CU(B)). The BNC reduces molecular oxygen to 2 water molecules using 4 electrons from cytochrome c in the IMS and 4 protons from the mitochondrial matrix. This chain is Cytochrome c oxidase subunit 2 (cox-2), found in Caenorhabditis remanei (Caenorhabditis vulgaris).